We begin with the raw amino-acid sequence, 163 residues long: Cyanate hydratase (163 aa).

Active-site residues include Arg103, Glu106, and Ser129.

The protein belongs to the cyanase family.

The catalysed reaction is cyanate + hydrogencarbonate + 3 H(+) = NH4(+) + 2 CO2. In terms of biological role, catalyzes the reaction of cyanate with bicarbonate to produce ammonia and carbon dioxide. This Paracoccidioides brasiliensis (strain Pb18) protein is Cyanate hydratase.